The following is a 527-amino-acid chain: Rhamnogalacturonate lyase A (527 aa).

Residues 1-20 (MLSKTFLLSSAVLWARVANA) form the signal peptide. Asn-27 and Asn-46 each carry an N-linked (GlcNAc...) asparagine glycan. 2 disulfides stabilise this stretch: Cys-50-Cys-93 and Cys-184-Cys-193. Asn-351 carries an N-linked (GlcNAc...) asparagine glycan.

Belongs to the polysaccharide lyase 4 family.

The protein resides in the secreted. It catalyses the reaction Endotype eliminative cleavage of L-alpha-rhamnopyranosyl-(1-&gt;4)-alpha-D-galactopyranosyluronic acid bonds of rhamnogalacturonan I domains in ramified hairy regions of pectin leaving L-rhamnopyranose at the reducing end and 4-deoxy-4,5-unsaturated D-galactopyranosyluronic acid at the non-reducing end.. Its function is as follows. Pectinolytic enzymes consist of four classes of enzymes: pectin lyase, polygalacturonase, pectin methylesterase and rhamnogalacturonase. Degrades the rhamnogalacturonan I (RG-I) backbone of pectin. Active against linseed rhamnogalacturonan. The protein is Rhamnogalacturonate lyase A (rglA) of Emericella nidulans (strain FGSC A4 / ATCC 38163 / CBS 112.46 / NRRL 194 / M139) (Aspergillus nidulans).